A 237-amino-acid chain; its full sequence is Proteasome subunit beta type-1-B (237 aa).

Belongs to the peptidase T1B family. The 26S proteasome consists of a 20S proteasome core and two 19S regulatory subunits. The 20S proteasome core is composed of 28 subunits that are arranged in four stacked rings, resulting in a barrel-shaped structure. The two end rings are each formed by seven alpha subunits, and the two central rings are each formed by seven beta subunits. The catalytic chamber with the active sites is on the inside of the barrel.

The protein localises to the cytoplasm. It localises to the nucleus. Non-catalytic component of the proteasome, a multicatalytic proteinase complex which is characterized by its ability to cleave peptides with Arg, Phe, Tyr, Leu, and Glu adjacent to the leaving group at neutral or slightly basic pH. The proteasome has an ATP-dependent proteolytic activity. The polypeptide is Proteasome subunit beta type-1-B (psmb1-B) (Carassius auratus (Goldfish)).